Reading from the N-terminus, the 555-residue chain is Formate--tetrahydrofolate ligase (555 aa).

Position 65-72 (65-72) interacts with ATP; that stretch reads TPAGEGKT.

It belongs to the formate--tetrahydrofolate ligase family.

The enzyme catalyses (6S)-5,6,7,8-tetrahydrofolate + formate + ATP = (6R)-10-formyltetrahydrofolate + ADP + phosphate. The protein operates within one-carbon metabolism; tetrahydrofolate interconversion. The protein is Formate--tetrahydrofolate ligase of Thermoanaerobacter sp. (strain X514).